The chain runs to 59 residues: Light-harvesting protein B-800-850 alpha chain E (59 aa).

The Cytoplasmic segment spans residues 1–11 (MNQGRIWTVVK). A helical transmembrane segment spans residues 12–35 (PTVGLPLLLGSVTVIAILVHFAVL). His-31 provides a ligand contact to a bacteriochlorophyll. At 36–59 (SNTTWFSKYWNGKAAAIESSVSIG) the chain is on the periplasmic side.

Belongs to the antenna complex alpha subunit family. As to quaternary structure, the core complex is formed by different alpha and beta chains, binding bacteriochlorophyll molecules, and arranged most probably in tetrameric structures disposed around the reaction center. The non-pigmented gamma chains may constitute additional components.

Its subcellular location is the cell inner membrane. Antenna complexes are light-harvesting systems, which transfer the excitation energy to the reaction centers. The sequence is that of Light-harvesting protein B-800-850 alpha chain E (pucAE) from Rhodopseudomonas palustris (strain ATCC BAA-98 / CGA009).